Here is an 82-residue protein sequence, read N- to C-terminus: Photosystem I iron-sulfur center (82 aa).

2 consecutive 4Fe-4S ferredoxin-type domains span residues 2–31 (AHTV…MVPW) and 40–69 (IAAA…IRVY). 8 residues coordinate [4Fe-4S] cluster: Cys11, Cys14, Cys17, Cys21, Cys49, Cys52, Cys55, and Cys59.

In terms of assembly, the cyanobacterial PSI reaction center is composed of one copy each of PsaA,B,C,D,E,F,I,J,K,L,M and X, and forms trimeric complexes. The cofactor is [4Fe-4S] cluster.

It localises to the cellular thylakoid membrane. It carries out the reaction reduced [plastocyanin] + hnu + oxidized [2Fe-2S]-[ferredoxin] = oxidized [plastocyanin] + reduced [2Fe-2S]-[ferredoxin]. Functionally, apoprotein for the two 4Fe-4S centers FA and FB of photosystem I (PSI); essential for photochemical activity. FB is the terminal electron acceptor of PSI, donating electrons to ferredoxin. The C-terminus interacts with PsaA/B/D and helps assemble the protein into the PSI complex. Required for binding of PsaD and PsaE to PSI. PSI is a plastocyanin/cytochrome c6-ferredoxin oxidoreductase, converting photonic excitation into a charge separation, which transfers an electron from the donor P700 chlorophyll pair to the spectroscopically characterized acceptors A0, A1, FX, FA and FB in turn. The protein is Photosystem I iron-sulfur center of Synechococcus sp. (strain JA-3-3Ab) (Cyanobacteria bacterium Yellowstone A-Prime).